A 672-amino-acid chain; its full sequence is DNA-directed RNA polymerase subunit gamma (672 aa).

Cys-70, Cys-72, Cys-85, and Cys-88 together coordinate Zn(2+). Mg(2+) is bound by residues Asp-466, Asp-468, and Asp-470.

It belongs to the RNA polymerase beta' chain family. RpoC1 subfamily. As to quaternary structure, in cyanobacteria the RNAP catalytic core is composed of 2 alpha, 1 beta, 1 beta', 1 gamma and 1 omega subunit. When a sigma factor is associated with the core the holoenzyme is formed, which can initiate transcription. It depends on Mg(2+) as a cofactor. Requires Zn(2+) as cofactor.

It carries out the reaction RNA(n) + a ribonucleoside 5'-triphosphate = RNA(n+1) + diphosphate. Its function is as follows. DNA-dependent RNA polymerase catalyzes the transcription of DNA into RNA using the four ribonucleoside triphosphates as substrates. The chain is DNA-directed RNA polymerase subunit gamma from Trichodesmium erythraeum (strain IMS101).